Reading from the N-terminus, the 182-residue chain is Ribosome-recycling factor (182 aa).

A disordered region spans residues 136–160; that stretch reads VKKSEKDGDLSEDQSRDEQEKIQKE.

It belongs to the RRF family.

It localises to the cytoplasm. In terms of biological role, responsible for the release of ribosomes from messenger RNA at the termination of protein biosynthesis. May increase the efficiency of translation by recycling ribosomes from one round of translation to another. In Prochlorococcus marinus (strain NATL1A), this protein is Ribosome-recycling factor.